Consider the following 2545-residue polypeptide: Methylphloroacetophenone synthase (2545 aa).

Positions 8 to 261 (AFGALAPWPA…HVAIHEGIPQ (254 aa)) are N-terminal acylcarrier protein transacylase (SAT) domain. Positions 383–798 (KDAIAIIGMG…GSNAAMIVLE (416 aa)) constitute a Ketosynthase family 3 (KS3) domain. Residues C547, H682, and H721 each act as for beta-ketoacyl synthase activity in the active site. The tract at residues 914–1218 (LCFGGQVSDR…VSLQLNKPNS (305 aa)) is malonyl-CoA:ACP transacylase (MAT) domain. The active-site For acyl/malonyl transferase activity is S1001. Residues 1293 to 1423 (LPAVLIRLKS…GTVNLKVADD (131 aa)) form an N-terminal hotdog fold region. In terms of domain architecture, PKS/mFAS DH spans 1293-1605 (LPAVLIRLKS…FTDIRRPVPI (313 aa)). A product template (PT) domain region spans residues 1296–1604 (VLIRLKSFDS…NFTDIRRPVP (309 aa)). The C-terminal hotdog fold stretch occupies residues 1449–1605 (RSESLRGNVL…FTDIRRPVPI (157 aa)). A Carrier domain is found at 1657-1731 (TSIYEDICGL…SLVDYLHGKG (75 aa)). Position 1691 is an O-(pantetheine 4'-phosphoryl)serine (S1691). Over residues 1748–1768 (SSSHAISTGASSPPDSSGASA) the composition is skewed to low complexity. Positions 1748 to 1773 (SSSHAISTGASSPPDSSGASAMTTPP) are disordered. The tract at residues 1931 to 2163 (FGASETKLLN…GFKHVSWTDG (233 aa)) is methyltransferase (CMeT) domain. Positions 2198 to 2544 (AGVPMEEVVW…YDFICRQLGM (347 aa)) are claisen cyclase (CLC) domain. Residues S2321, D2481, and H2513 each act as for thioesterase activity in the active site.

Functionally, methylphloroacetophenone synthase; part of the gene cluster that mediates the biosynthesis of usnic acid, a dibenzofuran lichen product possessing a broad spectrum of biological activities. Two genes, mpas and mpao, comprise the usnic acid biosynthetic gene cluster with a single post-PKS enzyme, the methylphloracetophenone oxidase (mpao). The methylphloroacetophenone synthase (mpas) is a non-reducing polyketide synthase that produces methylphloracetophenone from acetate via a methylated tetraketide intermediate. The methylphloroacetophenone oxidase then carries out the oxidative dimerization of methylphloracetophenone to usnic acid. The polypeptide is Methylphloroacetophenone synthase (Cladonia uncialis (Cup lichen)).